The following is a 1611-amino-acid chain: SH3 domain-containing protein C23A1.17 (1611 aa).

Positions 3-67 (SFPTRVVALY…PKDFTEPAED (65 aa)) constitute an SH3 domain. 4 disordered regions span residues 275-648 (THPA…PTSL), 662-741 (IDPP…PPGL), 762-851 (AVPR…NSLN), and 886-1365 (TPST…FSAK). Polar residues predominate over residues 278–296 (AASSTMATESSHQSPSADS). The span at 300 to 312 (ELSKSQRVAKDDD) shows a compositional bias: basic and acidic residues. Residues 316–330 (VSNTANSDEPASSSK) show a composition bias toward polar residues. Composition is skewed to acidic residues over residues 361-373 (SEQEEDEYDDAES) and 387-420 (SEPEDQDEPSEKDDENKDVEEEQEQEQEEEQIDP). Residues 421–433 (EEAKRIALRERMA) are compositionally biased toward basic and acidic residues. Over residues 472-494 (STTNDSSPPKDSSSTSTQPTEQS) the composition is skewed to low complexity. Positions 576–586 (TQETSEQQVHK) are enriched in polar residues. The span at 605-619 (FDKETLASNEAHEAV) shows a compositional bias: basic and acidic residues. Over residues 637–648 (SSSVVTPSPTSL) the composition is skewed to low complexity. 3 stretches are compositionally biased toward polar residues: residues 799 to 808 (SRPSTGSQLR), 886 to 902 (TPSTATFQGHPTISNVA), and 923 to 940 (ATHQSSTGLTQEITQLGS). Pro residues-rich tracts occupy residues 963 to 974 (PAAPPSIPPPLP), 1022 to 1053 (PPVPLPSADAPPIPVPSTAPPVPIPTSTPPVP), and 1076 to 1241 (IPAP…PVPA). Residues 1242 to 1278 (PSSEAPSVSTPRSSVPSPHSNASPSPTSSSMASAAPA) show a composition bias toward low complexity. Phosphoserine is present on residues S1258, S1261, and S1266. A compositionally biased stretch (basic residues) spans 1300–1312 (KSSKSGEHHHHHN). Polar residues predominate over residues 1317–1327 (DSSSTRTSLAH). Residues 1340 to 1350 (RSSSRASKKPS) show a composition bias toward low complexity. Residues 1351 to 1362 (IVSTTGPFNESF) are compositionally biased toward polar residues. A Phosphoserine modification is found at S1379. T1380 bears the Phosphothreonine mark.

It is found in the cytoplasm. The polypeptide is SH3 domain-containing protein C23A1.17 (Schizosaccharomyces pombe (strain 972 / ATCC 24843) (Fission yeast)).